We begin with the raw amino-acid sequence, 301 residues long: Homoserine O-acetyltransferase (301 aa).

C142 acts as the Acyl-thioester intermediate in catalysis. Residues K163 and S192 each coordinate substrate. Residue H235 is the Proton acceptor of the active site. E237 is a catalytic residue. R249 contacts substrate.

Belongs to the MetA family.

The protein localises to the cytoplasm. The catalysed reaction is L-homoserine + acetyl-CoA = O-acetyl-L-homoserine + CoA. It functions in the pathway amino-acid biosynthesis; L-methionine biosynthesis via de novo pathway; O-acetyl-L-homoserine from L-homoserine: step 1/1. Transfers an acetyl group from acetyl-CoA to L-homoserine, forming acetyl-L-homoserine. In Bacillus anthracis (strain A0248), this protein is Homoserine O-acetyltransferase.